The following is a 288-amino-acid chain: Xyloglucan endotransglucosylase protein 8 (288 aa).

A signal peptide spans 1 to 25 (MAASPYSIFAVQLLLLASWMLSSSS). A GH16 domain is found at 26 to 215 (SNFNQDFNIA…WTQAPFTTSY (190 aa)). Residue glutamate 102 is the Nucleophile of the active site. Glutamate 106 serves as the catalytic Proton donor. Glutamate 106 contributes to the xyloglucan binding site. Residue asparagine 110 is glycosylated (N-linked (GlcNAc...) asparagine). Xyloglucan is bound by residues 119–121 (HTN), 129–131 (ERE), 194–195 (EW), and glycine 199. 2 disulfide bridges follow: cysteine 224-cysteine 233 and cysteine 268-cysteine 282. Arginine 273 contributes to the xyloglucan binding site.

It belongs to the glycosyl hydrolase 16 family. XTH group 2 subfamily. Post-translationally, contains at least one intrachain disulfide bond essential for its enzymatic activity. Highly expressed in mature fruits. Very low expression in leaves, flowers, calyces and stems.

It localises to the secreted. Its subcellular location is the cell wall. The protein resides in the extracellular space. The protein localises to the apoplast. It carries out the reaction breaks a beta-(1-&gt;4) bond in the backbone of a xyloglucan and transfers the xyloglucanyl segment on to O-4 of the non-reducing terminal glucose residue of an acceptor, which can be a xyloglucan or an oligosaccharide of xyloglucan.. Functionally, catalyzes xyloglucan endotransglycosylation (XET). Cleaves and religates xyloglucan polymers. Does not catalyze xyloglucan endohydrolysis (XEH). Overexpression in Arabidopsis transgenic plants causes accelerated dark-induced leaf senescence and higher lipid peroxidation of the leaf cells. Overexpression in transgenic tomato plants promotes fruit ripening and softening. Probably involved in cell wall restructuring during postharvest fruit softening. The chain is Xyloglucan endotransglucosylase protein 8 from Diospyros kaki (Kaki persimmon).